A 439-amino-acid polypeptide reads, in one-letter code: Xylose isomerase (439 aa).

Active-site residues include histidine 101 and aspartate 104. Mg(2+) is bound by residues glutamate 232, glutamate 268, histidine 271, aspartate 296, aspartate 307, aspartate 309, and aspartate 339.

It belongs to the xylose isomerase family. In terms of assembly, homotetramer. The cofactor is Mg(2+).

The protein localises to the cytoplasm. It catalyses the reaction alpha-D-xylose = alpha-D-xylulofuranose. This is Xylose isomerase from Pectobacterium atrosepticum (strain SCRI 1043 / ATCC BAA-672) (Erwinia carotovora subsp. atroseptica).